The primary structure comprises 94 residues: Putative regulatory protein LEPBI_I0950 (94 aa).

It belongs to the RemA family.

In Leptospira biflexa serovar Patoc (strain Patoc 1 / ATCC 23582 / Paris), this protein is Putative regulatory protein LEPBI_I0950.